Here is a 250-residue protein sequence, read N- to C-terminus: ATP synthase subunit a (250 aa).

6 helical membrane passes run 31–51, 85–105, 115–135, 144–164, 194–214, and 217–237; these read SAYM…GMAG, FFPL…IGII, LIVT…YGLY, LFVP…IEVI, FVGM…LPLG, and VAVT…FTIL.

It belongs to the ATPase A chain family. In terms of assembly, F-type ATPases have 2 components, CF(1) - the catalytic core - and CF(0) - the membrane proton channel. CF(1) has five subunits: alpha(3), beta(3), gamma(1), delta(1), epsilon(1). CF(0) has four main subunits: a, b, b' and c.

It is found in the cell inner membrane. Functionally, key component of the proton channel; it plays a direct role in the translocation of protons across the membrane. This chain is ATP synthase subunit a, found in Rhodopseudomonas palustris (strain BisB5).